The chain runs to 118 residues: Large ribosomal subunit protein uL18 (118 aa).

Residues 1–24 (MISKPDKNKIRQKRHRRVRGKLSG) are disordered. Residues 10–20 (IRQKRHRRVRG) show a composition bias toward basic residues.

Belongs to the universal ribosomal protein uL18 family. Part of the 50S ribosomal subunit; part of the 5S rRNA/L5/L18/L25 subcomplex. Contacts the 5S and 23S rRNAs.

This is one of the proteins that bind and probably mediate the attachment of the 5S RNA into the large ribosomal subunit, where it forms part of the central protuberance. In Streptococcus agalactiae serotype III (strain NEM316), this protein is Large ribosomal subunit protein uL18.